The primary structure comprises 609 residues: MRMPYEIKKVFASLPQVERGVSKIIGGDPKGNNFLYTNGKCVVIRNIDNPAIADIYTEHAHQVVVAKYAPSGFYIASGDVSGKLRIWDTTQKEHLLKYEYQPFAGKIKDLAWTEDSKRIAVVGEGREKFGAVFLWDSGSSVGEITGHNKVINSVDIKQTRPYRLATGSDDNCAAFFEGPPFKFKFTLSDHTRFVNCVRFSPDGNRFATASADGQIFIYDGKTGEKVCALGGGKAHDGGIYAISWSPDSSQLLSASGDKTAKIWDVGANSVVSTFNMGSNVLDQQLGCLWQKDHLLSLSLSGYINYLDKNNPDKPLRVIKGHSKSIQCLTVHKNGGKSYIYSGSNDGHINYWDSDTGENDGFSGKGHTNQVSRMAVDEMDQLVTCSMDDTVRYTNLSKRDYSGQDAVKMDVQPKCLAVGPGGYTVVLCIGQIVLMKDKKKCFAIDDLGYEPEAVAVHPGGGSVAVGGTDGNVRLYSIQGTSLKSDDKTLEAKGPVTDLAYSHDGAFLAVCDANKVVTVFSVPDGYVEHNVFYGHHAKVVCIAWSPDNEHFASGGMDMMVYVWTVSDPETRIKIPDAHRLHHVSGLAWLDEHTLVTTSHDASVKEWSISYN.

WD repeat units lie at residues 6-47 (EIKK…IRNI), 50-89 (PAIA…IWDT), 95-137 (LLKY…LWDS), 140-178 (SVGE…FFEG), 182-220 (KFKF…IYDG), 226-265 (VCAL…IWDV), 272-308 (STFN…YLDK), 313-353 (KPLR…YWDS), 360-410 (GFSG…KMDV), 434-476 (MKDK…LYSI), 482-520 (KSDD…VFSV), 525-563 (VEHN…VWTV), and 568-606 (TRIK…EWSI).

This sequence belongs to the WD repeat AIP1 family.

The protein localises to the cytoplasm. It is found in the cytoskeleton. Its function is as follows. Induces disassembly of actin filaments in conjunction with ADF/cofilin family proteins. Enhances cofilin-mediated actin severing. The chain is WD repeat-containing protein 1 (WDR1) from Gallus gallus (Chicken).